Reading from the N-terminus, the 294-residue chain is UPF0282 protein APE_0500.1 (294 aa).

Belongs to the UPF0282 family.

The chain is UPF0282 protein APE_0500.1 from Aeropyrum pernix (strain ATCC 700893 / DSM 11879 / JCM 9820 / NBRC 100138 / K1).